A 256-amino-acid chain; its full sequence is Thiazole synthase (256 aa).

Residue Lys-102 is the Schiff-base intermediate with DXP of the active site. 1-deoxy-D-xylulose 5-phosphate-binding positions include Gly-163, 189 to 190 (AG), and 211 to 212 (AT).

The protein belongs to the ThiG family. Homotetramer. Forms heterodimers with either ThiH or ThiS.

Its subcellular location is the cytoplasm. The catalysed reaction is [ThiS sulfur-carrier protein]-C-terminal-Gly-aminoethanethioate + 2-iminoacetate + 1-deoxy-D-xylulose 5-phosphate = [ThiS sulfur-carrier protein]-C-terminal Gly-Gly + 2-[(2R,5Z)-2-carboxy-4-methylthiazol-5(2H)-ylidene]ethyl phosphate + 2 H2O + H(+). It participates in cofactor biosynthesis; thiamine diphosphate biosynthesis. In terms of biological role, catalyzes the rearrangement of 1-deoxy-D-xylulose 5-phosphate (DXP) to produce the thiazole phosphate moiety of thiamine. Sulfur is provided by the thiocarboxylate moiety of the carrier protein ThiS. In vitro, sulfur can be provided by H(2)S. This Nocardia farcinica (strain IFM 10152) protein is Thiazole synthase.